A 268-amino-acid chain; its full sequence is MRRIAVVGAAGRMGKNLIEAVQQTGGAAGLTAAVDRPDSTLVGADAGELAGLGRIGVPLSGDLGKVCEEFDVLIDFTHPSVTLKNIEQCRKARRAMVIGTTGFSADEKLLLAEAAKDIPIVFAANFSVGVNLCLKLLDTAARVLGDEVDIEIIEAHHRHKVDAPSGTALRMGEVVAQALGRDLQEVAVYGREGQTGARARETIGFATVRAGDVVGDHTVLFAAEGERVEITHKASSRMTFARGAVRAALWLEGKENGLYDMQDVLGLR.

Residues 8–13 and Asp-35 each bind NAD(+); that span reads GAAGRM. Position 36 (Arg-36) interacts with NADP(+). NAD(+)-binding positions include 99–101 and 123–126; these read GTT and AANF. Catalysis depends on His-156, which acts as the Proton donor/acceptor. (S)-2,3,4,5-tetrahydrodipicolinate is bound at residue His-157. Lys-160 acts as the Proton donor in catalysis. 166 to 167 is a binding site for (S)-2,3,4,5-tetrahydrodipicolinate; sequence GT.

It belongs to the DapB family.

Its subcellular location is the cytoplasm. The enzyme catalyses (S)-2,3,4,5-tetrahydrodipicolinate + NAD(+) + H2O = (2S,4S)-4-hydroxy-2,3,4,5-tetrahydrodipicolinate + NADH + H(+). It carries out the reaction (S)-2,3,4,5-tetrahydrodipicolinate + NADP(+) + H2O = (2S,4S)-4-hydroxy-2,3,4,5-tetrahydrodipicolinate + NADPH + H(+). The protein operates within amino-acid biosynthesis; L-lysine biosynthesis via DAP pathway; (S)-tetrahydrodipicolinate from L-aspartate: step 4/4. In terms of biological role, catalyzes the conversion of 4-hydroxy-tetrahydrodipicolinate (HTPA) to tetrahydrodipicolinate. In Pseudomonas aeruginosa (strain LESB58), this protein is 4-hydroxy-tetrahydrodipicolinate reductase.